The chain runs to 207 residues: Large ribosomal subunit protein bL25 (207 aa).

Belongs to the bacterial ribosomal protein bL25 family. CTC subfamily. In terms of assembly, part of the 50S ribosomal subunit; part of the 5S rRNA/L5/L18/L25 subcomplex. Contacts the 5S rRNA. Binds to the 5S rRNA independently of L5 and L18.

Its function is as follows. This is one of the proteins that binds to the 5S RNA in the ribosome where it forms part of the central protuberance. In Orientia tsutsugamushi (strain Boryong) (Rickettsia tsutsugamushi), this protein is Large ribosomal subunit protein bL25.